We begin with the raw amino-acid sequence, 530 residues long: Sensor protein kinase PilS (530 aa).

6 helical membrane passes run 25 to 37, 57 to 70, 76 to 98, 101 to 119, 124 to 144, and 156 to 174; these read LTIG…LISS, WCYL…ALFL, LLPI…YAGG, PSGI…NILL, GLVI…FLSL, and AGGL…QALV. Over 175–530 the chain is Cytoplasmic; sequence RRQEQTETLA…ITFAHPRKLS (356 aa). The PAS domain maps to 196–260; sequence ELNALILQRM…KQWRLNPSLR (65 aa). The region spanning 316–527 is the Histidine kinase domain; it reads GIAHEIRNPL…CFRITFAHPR (212 aa). Residue H319 is modified to Phosphohistidine; by autocatalysis.

In terms of assembly, interacts with PilA.

It localises to the cell inner membrane. It catalyses the reaction ATP + protein L-histidine = ADP + protein N-phospho-L-histidine.. Its function is as follows. Member of the two-component regulatory system PilS/PilR that regulates the expression of multiple genes including the type IV pilus (T4P) major subunit PilA. Thereby, plays a major role in the regulation of multiple motility pathways. Functions as a membrane-associated protein kinase that phosphorylates PilR in response to environmental signals leading to activation of specific gene promoters including the pilin gene. This Pseudomonas aeruginosa (strain ATCC 15692 / DSM 22644 / CIP 104116 / JCM 14847 / LMG 12228 / 1C / PRS 101 / PAO1) protein is Sensor protein kinase PilS (pilS).